Here is a 351-residue protein sequence, read N- to C-terminus: Methionine import ATP-binding protein MetN (351 aa).

Residues 2 to 241 (IELRNVTKTY…PKTEIAKKFT (240 aa)) form the ABC transporter domain. 38-45 (GKSGAGKS) provides a ligand contact to ATP.

The protein belongs to the ABC transporter superfamily. Methionine importer (TC 3.A.1.24) family. The complex is composed of two ATP-binding proteins (MetN), two transmembrane proteins (MetI) and a solute-binding protein (MetQ).

The protein resides in the cell inner membrane. It carries out the reaction L-methionine(out) + ATP + H2O = L-methionine(in) + ADP + phosphate + H(+). The catalysed reaction is D-methionine(out) + ATP + H2O = D-methionine(in) + ADP + phosphate + H(+). In terms of biological role, part of the ABC transporter complex MetNIQ involved in methionine import. Responsible for energy coupling to the transport system. The protein is Methionine import ATP-binding protein MetN of Coxiella burnetii (strain RSA 493 / Nine Mile phase I).